The primary structure comprises 397 residues: Mannonate dehydratase (397 aa).

Belongs to the mannonate dehydratase family. Requires Fe(2+) as cofactor. Mn(2+) is required as a cofactor.

The catalysed reaction is D-mannonate = 2-dehydro-3-deoxy-D-gluconate + H2O. It functions in the pathway carbohydrate metabolism; pentose and glucuronate interconversion. Its function is as follows. Catalyzes the dehydration of D-mannonate. The sequence is that of Mannonate dehydratase from Yersinia pseudotuberculosis serotype O:1b (strain IP 31758).